The following is a 784-amino-acid chain: Cell wall protein Lmo0130 (784 aa).

Positions 1–34 (MKVNKFFKKTTHVLLVAGLTIGLTAPFTGTTAQA) are cleaved as a signal peptide. The segment at 690–761 (ATTPPDNGNG…NTSLPTTGDT (72 aa)) is disordered. The span at 697–729 (GNGGTDNGNGNGNNGGTDGNGGTNNGNGSGTNG) shows a compositional bias: gly residues. The segment covering 730-759 (GTTTTEDPTTTTSNTSTTGTSSNTSLPTTG) has biased composition (low complexity). An LPXTG sorting signal motif is present at residues 755-759 (LPTTG). Threonine 758 carries the pentaglycyl murein peptidoglycan amidated threonine modification. The propeptide at 759-784 (GDTAGLATVFGVILTTTALYVLRKRS) is removed by sortase A.

It is found in the secreted. The protein resides in the cell wall. The protein is Cell wall protein Lmo0130 of Listeria monocytogenes serovar 1/2a (strain ATCC BAA-679 / EGD-e).